The following is a 581-amino-acid chain: Pectinesterase 3 (581 aa).

Positions 1-55 (MDTIKSFKGYGKVNELEQQAYEKKTRKRLIIIAVSSIVLIAVIIAAVAGVVIHNR) are cleaved as a signal peptide. N-linked (GlcNAc...) asparagine glycosylation is found at Asn-101, Asn-156, Asn-200, Asn-217, and Asn-268. Thr-348 and Gln-378 together coordinate substrate. Asp-401 (proton donor) is an active-site residue. A disulfide bond links Cys-415 and Cys-435. Asp-422 acts as the Nucleophile in catalysis. An N-linked (GlcNAc...) asparagine glycan is attached at Asn-477. 2 residues coordinate substrate: Arg-486 and Trp-488.

The protein in the N-terminal section; belongs to the PMEI family. In the C-terminal section; belongs to the pectinesterase family.

It is found in the secreted. The protein localises to the cell wall. The catalysed reaction is [(1-&gt;4)-alpha-D-galacturonosyl methyl ester](n) + n H2O = [(1-&gt;4)-alpha-D-galacturonosyl](n) + n methanol + n H(+). Its pathway is glycan metabolism; pectin degradation; 2-dehydro-3-deoxy-D-gluconate from pectin: step 1/5. Its function is as follows. May have roles in the deposition of pectin in developing tissues and in the wall loosening and cell separation that occurs in cell expansion, fruit ripening and abscission. In Phaseolus vulgaris (Kidney bean), this protein is Pectinesterase 3 (MPE3).